A 565-amino-acid polypeptide reads, in one-letter code: Oxygen-dependent choline dehydrogenase (565 aa).

6–35 (DYIIVGAGSAGNTLATRLTEDAGVTVLLLE) serves as a coordination point for FAD. Residues 182 to 201 (QQEGFGPMDRTVTKNGRRSS) form a disordered region. His475 serves as the catalytic Proton acceptor.

The protein belongs to the GMC oxidoreductase family. It depends on FAD as a cofactor.

The enzyme catalyses choline + A = betaine aldehyde + AH2. The catalysed reaction is betaine aldehyde + NAD(+) + H2O = glycine betaine + NADH + 2 H(+). Its pathway is amine and polyamine biosynthesis; betaine biosynthesis via choline pathway; betaine aldehyde from choline (cytochrome c reductase route): step 1/1. Involved in the biosynthesis of the osmoprotectant glycine betaine. Catalyzes the oxidation of choline to betaine aldehyde and betaine aldehyde to glycine betaine at the same rate. The sequence is that of Oxygen-dependent choline dehydrogenase from Pseudomonas putida (strain ATCC 47054 / DSM 6125 / CFBP 8728 / NCIMB 11950 / KT2440).